Here is a 338-residue protein sequence, read N- to C-terminus: 3 beta-hydroxysteroid dehydrogenase type 7 (338 aa).

The active-site Proton acceptor is Tyr159. Lys163 is an NAD(+) binding site. 2 helical membrane-spanning segments follow: residues 258–278 (LLPYWLLVLLTALNALLQWLL) and 280–300 (PLVLYTPLLNPYTLAVANTTF).

This sequence belongs to the 3-beta-HSD family. As to expression, high levels in liver and lung, moderate levels in spleen, brain, heart, kidney, jejunum and testis. Up-regulated in 3Y1 cells upon growth arrest.

It localises to the endoplasmic reticulum membrane. It carries out the reaction 7alpha-hydroxycholesterol + NAD(+) = 7alpha-hydroxycholest-4-en-3-one + NADH + H(+). The catalysed reaction is 7alpha,25-dihydroxycholesterol + NAD(+) = 7alpha,25-dihydroxy-4-cholesten-3-one + NADH + H(+). The enzyme catalyses (25R)-cholest-5-en-3beta,7alpha,26-triol + NAD(+) = (25R)-7alpha,26-dihydroxycholest-4-en-3-one + NADH + H(+). It catalyses the reaction (24S)-7alpha-dihydroxycholesterol + NAD(+) = (24S)-7alpha,24-dihydroxycholest-4-en-3-one + NADH + H(+). Its pathway is lipid metabolism; steroid biosynthesis. The 3-beta-HSD enzymatic system plays a crucial role in the biosynthesis of all classes of hormonal steroids. HSD VII is active against four 7-alpha-hydroxylated sterols. Does not metabolize several different C(19/21) steroids as substrates. Involved in bile acid synthesis. Plays a key role in cell positioning and movement in lymphoid tissues by mediating degradation of 7-alpha,25-dihydroxycholesterol (7-alpha,25-OHC): 7-alpha,25-OHC acts as a ligand for the G protein-coupled receptor GPR183/EBI2, a chemotactic receptor for a number of lymphoid cells. This Rattus norvegicus (Rat) protein is 3 beta-hydroxysteroid dehydrogenase type 7.